A 212-amino-acid chain; its full sequence is Methylthioribulose-1-phosphate dehydratase (212 aa).

Positions 97 and 99 each coordinate Zn(2+).

It belongs to the aldolase class II family. MtnB subfamily. In terms of assembly, homotetramer. It depends on Zn(2+) as a cofactor.

It carries out the reaction 5-(methylsulfanyl)-D-ribulose 1-phosphate = 5-methylsulfanyl-2,3-dioxopentyl phosphate + H2O. The protein operates within amino-acid biosynthesis; L-methionine biosynthesis via salvage pathway; L-methionine from S-methyl-5-thio-alpha-D-ribose 1-phosphate: step 2/6. Its function is as follows. Catalyzes the dehydration of methylthioribulose-1-phosphate (MTRu-1-P) into 2,3-diketo-5-methylthiopentyl-1-phosphate (DK-MTP-1-P). The sequence is that of Methylthioribulose-1-phosphate dehydratase from Bacillus cereus (strain ATCC 10987 / NRS 248).